Here is a 1264-residue protein sequence, read N- to C-terminus: Ubiquitin carboxyl-terminal hydrolase usp-48 (1264 aa).

A USP domain is found at 108–430 (AGLINGGNFC…ACYGLLYRRR (323 aa)). Cysteine 117 serves as the catalytic Nucleophile. The active-site Proton acceptor is the histidine 366. Disordered stretches follow at residues 390 to 415 (IPKPPGTEKPTTAKTEKSRKKDKEKY), 522 to 610 (AKGE…IMDT), and 630 to 679 (TVEV…PVSS). Composition is skewed to basic and acidic residues over residues 403-415 (KTEKSRKKDKEKY) and 532-543 (EASENEEKKKNE). Positions 516-547 (AQEYEVAKGEKKKKKKEASENEEKKKNEEDEA) form a coiled coil. Residues 565-575 (SEPSTSAAATE) are compositionally biased toward low complexity. Polar residues-rich tracts occupy residues 587–599 (ETPNPENAESTQV) and 663–678 (NGTNGTNSSPQKQPVS).

Belongs to the peptidase C19 family. As to expression, broadly expressed. Expressed in germline.

It is found in the nucleus. It localises to the chromosome. It carries out the reaction Thiol-dependent hydrolysis of ester, thioester, amide, peptide and isopeptide bonds formed by the C-terminal Gly of ubiquitin (a 76-residue protein attached to proteins as an intracellular targeting signal).. Recognizes and hydrolyzes the peptide bond at the C-terminal Gly of ubiquitin. Involved in the processing of poly-ubiquitin precursors as well as that of ubiquitinated proteins. Required post-developmentally to restrict the plasticity of epidermal cells, probably by regulating gene expression. The chain is Ubiquitin carboxyl-terminal hydrolase usp-48 from Caenorhabditis elegans.